Here is a 527-residue protein sequence, read N- to C-terminus: NAD(P)H-quinone oxidoreductase chain 4 1 (527 aa).

A run of 14 helical transmembrane segments spans residues 5-25 (FPWLTTIILFPIVASLLLPII), 35-55 (WYSLIVGLIDFAIIIAAFCTG), 90-110 (LIILTGFITTLAIMAAWPVSF), 112-132 (PKLFYFLMLAMYGGQIAVFAV), 136-156 (LLFFLVWELELVPVYLILSIW), 168-188 (FILYTAGGSLFILIAALTMAF), 211-231 (LLLYAAFLIAYAVKLPIFPLH), 242-262 (TAPAHMLLAGILLKMGGYALL), 274-294 (AVFAPVLVILGVVNIVYAALT), 310-330 (ISHMGFVLIGMASFTDIGLSG), 331-351 (AVLQMISHGLIGASLFFLVGA), 386-406 (LALPGMSGFVAEVMVFIGFAT), 416-436 (VLVIFLSAVGVILTPIYLLSM), and 463-483 (VFIIGCLLVPIIGIGLYPKIV).

Belongs to the complex I subunit 4 family.

It is found in the cellular thylakoid membrane. The catalysed reaction is a plastoquinone + NADH + (n+1) H(+)(in) = a plastoquinol + NAD(+) + n H(+)(out). It catalyses the reaction a plastoquinone + NADPH + (n+1) H(+)(in) = a plastoquinol + NADP(+) + n H(+)(out). In terms of biological role, NDH-1 shuttles electrons from NAD(P)H, via FMN and iron-sulfur (Fe-S) centers, to quinones in the respiratory chain. The immediate electron acceptor for the enzyme in this species is believed to be plastoquinone. Couples the redox reaction to proton translocation (for every two electrons transferred, four hydrogen ions are translocated across the cytoplasmic membrane), and thus conserves the redox energy in a proton gradient. This chain is NAD(P)H-quinone oxidoreductase chain 4 1, found in Trichodesmium erythraeum (strain IMS101).